Consider the following 378-residue polypeptide: MHNLYSITGYPDPPGTMEEEEEDDDYENSTPPYKDLPPKPGTMEEEEEDDDYENSTPPYKDLPPKPGTMEEEEEDDDYENSTPPYKDLPPKPGSSAPPRPPRAAKETEKPPLPCKPRNMTGLDLAAVTCPPPQLAVNLEPSPLQPSLAATPVPWLNQRSGGPGCCQKRWMVYLCLLVVTSLFLGCLGLTVTLIKYQELMEELRMLSFQQMTWRTNMTGMAGLAGLKHDIARVRADTNQSLVELWGLLDCRRITCPEGWLPFEGKCYYFSPSTKSWDEARMFCQENYSHLVIINSFAEHNFVAKAHGSPRVYWLGLNDRAQEGDWRWLDGSPVTLSFWEPEEPNNIHDEDCATMNKGGTWNDLSCYKTTYWICERKCSC.

Positions 1–119 are disordered; it reads MHNLYSITGY…PPLPCKPRNM (119 aa). The Cytoplasmic segment spans residues 1–172; it reads MHNLYSITGY…GCCQKRWMVY (172 aa). Acidic residues-rich tracts occupy residues 17–27, 43–53, and 69–79; these read MEEEEEDDDYE. Positions 86 to 101 are enriched in pro residues; sequence KDLPPKPGSSAPPRPP. A helical; Signal-anchor for type II membrane protein transmembrane segment spans residues 173–193; sequence LCLLVVTSLFLGCLGLTVTLI. The Extracellular portion of the chain corresponds to 194–378; sequence KYQELMEELR…YWICERKCSC (185 aa). Residues N215 and N237 are each glycosylated (N-linked (GlcNAc...) asparagine). Disulfide bonds link C254–C265, C282–C372, and C350–C364. A C-type lectin domain is found at 261–373; it reads FEGKCYYFSP…CYKTTYWICE (113 aa). Residue N285 is glycosylated (N-linked (GlcNAc...) asparagine). 5 residues coordinate Ca(2+): E341, N343, E348, N360, and D361.

As to quaternary structure, oligomer; disulfide-linked. Post-translationally, phosphorylated on tyrosine residues. In terms of tissue distribution, expressed on dividing B-cells of germinal centers in various tissues, including lymph nodes, tonsils, stomach, intestine, appendix and spleen.

The protein localises to the membrane. Functionally, cell surface receptor which may be involved in carbohydrate-mediated communication between cells in the germinal center. Binds glycans with terminal alpha-linked mannose or fucose residues. In Homo sapiens (Human), this protein is C-type lectin domain family 17, member A (CLEC17A).